The chain runs to 461 residues: Fumarate hydratase class II (461 aa).

Substrate-binding positions include 97 to 99 (SGT), 127 to 130 (HPND), 137 to 139 (SSN), and threonine 185. The active-site Proton donor/acceptor is histidine 186. Serine 316 is a catalytic residue. Substrate contacts are provided by residues serine 317 and 322 to 324 (KVN).

Belongs to the class-II fumarase/aspartase family. Fumarase subfamily. Homotetramer.

It localises to the cytoplasm. It catalyses the reaction (S)-malate = fumarate + H2O. Its pathway is carbohydrate metabolism; tricarboxylic acid cycle; (S)-malate from fumarate: step 1/1. Its function is as follows. Involved in the TCA cycle. Catalyzes the stereospecific interconversion of fumarate to L-malate. The polypeptide is Fumarate hydratase class II (Oceanobacillus iheyensis (strain DSM 14371 / CIP 107618 / JCM 11309 / KCTC 3954 / HTE831)).